A 63-amino-acid chain; its full sequence is MEWELNLLLYLALFFFLLFLLFLLLFVVIKQLKNSVANTAGALQPGRLSVHREPWGFSREQAV.

Important for interaction with SLC2A1 and SLC2A3 stretches follow at residues 7–29 (LLLYLALFFFLLFLLFLLLFVVI) and 51–57 (HREPWGF). The chain crosses the membrane as a helical span at residues 9–29 (LYLALFFFLLFLLFLLLFVVI).

In terms of assembly, interacts with glucose transporters SLC2A1/GLUT1 and SLC2A3/GLUT3; the interactions may promote SLC2A1- and SLC2A3-mediated glucose transport to meet the energy needs of mesendoderm differentiation.

Its subcellular location is the cell membrane. Functionally, required for mesendoderm differentiation. Interacts with glucose transporters and promotes glucose uptake. Probably augments the glucose uptake capacity of glucose transporter proteins to meet the energy needs of mesendoderm differentiation. The chain is Small integral membrane protein 43 from Homo sapiens (Human).